Consider the following 345-residue polypeptide: Annexin A9 (345 aa).

Annexin repeat units follow at residues 41–112 (FSVD…ALLQ), 113–184 (PAAQ…ALSK), 197–266 (NLEE…SLAS), and 270–341 (NTAL…ALCR).

It belongs to the annexin family. Homodimer.

In terms of biological role, may act as a low affinity receptor for acetylcholine. In Mus musculus (Mouse), this protein is Annexin A9 (Anxa9).